The primary structure comprises 507 residues: ATP synthase subunit alpha, chloroplastic (507 aa).

An ATP-binding site is contributed by 170–177; it reads GDRQTGKT.

The protein belongs to the ATPase alpha/beta chains family. In terms of assembly, F-type ATPases have 2 components, CF(1) - the catalytic core - and CF(0) - the membrane proton channel. CF(1) has five subunits: alpha(3), beta(3), gamma(1), delta(1), epsilon(1). CF(0) has four main subunits: a, b, b' and c.

The protein localises to the plastid. It localises to the chloroplast thylakoid membrane. The enzyme catalyses ATP + H2O + 4 H(+)(in) = ADP + phosphate + 5 H(+)(out). Its function is as follows. Produces ATP from ADP in the presence of a proton gradient across the membrane. The alpha chain is a regulatory subunit. The protein is ATP synthase subunit alpha, chloroplastic of Cycas taitungensis (Prince sago).